Reading from the N-terminus, the 38-residue chain is Kunitz-type trypsin inhibitor beta chain (38 aa).

The protein belongs to the protease inhibitor I3 (leguminous Kunitz-type inhibitor) family. In terms of assembly, heterodimer of an alpha and a beta chain linked by a disulfide bond.

Inhibition of trypsin. The chain is Kunitz-type trypsin inhibitor beta chain from Neltuma juliflora (Mesquite).